Reading from the N-terminus, the 327-residue chain is Malate dehydrogenase (327 aa).

12-18 is an NAD(+) binding site; sequence GAAGQIC. Residues Arg-92 and Arg-98 each contribute to the substrate site. Residues Asn-105, Gln-112, and 129 to 131 each bind NAD(+); that span reads TGN. Asn-131 and Arg-162 together coordinate substrate. His-187 (proton acceptor) is an active-site residue.

Belongs to the LDH/MDH superfamily. MDH type 2 family.

It catalyses the reaction (S)-malate + NAD(+) = oxaloacetate + NADH + H(+). Its function is as follows. Catalyzes the reversible oxidation of malate to oxaloacetate. The sequence is that of Malate dehydrogenase from Cutibacterium acnes (strain DSM 16379 / KPA171202) (Propionibacterium acnes).